Here is a 336-residue protein sequence, read N- to C-terminus: Cycloartenol-C-24-methyltransferase (336 aa).

Methionine 1 is subject to N-acetylmethionine.

Belongs to the class I-like SAM-binding methyltransferase superfamily. Erg6/SMT family. As to expression, highly expressed in vascular tissue, mature leaves and in regions undergoing cellular expansion.

The enzyme catalyses cycloartenol + S-adenosyl-L-methionine = 24-methylenecycloartanol + S-adenosyl-L-homocysteine + H(+). The protein operates within steroid biosynthesis; sterol biosynthesis. Functionally, catalyzes the methyl transfer from S-adenosyl-methionine to the C-24 of cycloartenol to form 24-methylene cycloartenol. The protein is Cycloartenol-C-24-methyltransferase (SMT1) of Arabidopsis thaliana (Mouse-ear cress).